Here is a 689-residue protein sequence, read N- to C-terminus: Glycine--tRNA ligase beta subunit (689 aa).

This sequence belongs to the class-II aminoacyl-tRNA synthetase family. In terms of assembly, tetramer of two alpha and two beta subunits.

The protein resides in the cytoplasm. The catalysed reaction is tRNA(Gly) + glycine + ATP = glycyl-tRNA(Gly) + AMP + diphosphate. This Pectobacterium carotovorum subsp. carotovorum (strain PC1) protein is Glycine--tRNA ligase beta subunit.